Here is a 593-residue protein sequence, read N- to C-terminus: Pyruvate decarboxylase 1 (593 aa).

Residues 1–19 show a composition bias toward polar residues; that stretch reads METETETPNGSTPCPTSAP. Residues 1–20 are disordered; that stretch reads METETETPNGSTPCPTSAPS. Residues Asp-55 and His-142 each contribute to the substrate site. Residues 420–502 form a thiamine pyrophosphate binding region; it reads DSWFNCQKLR…FLINNGGYTI (83 aa). Mg(2+)-binding residues include Asp-470, Asn-497, and Gly-499. Position 503 (Glu-503) interacts with substrate.

The protein belongs to the TPP enzyme family. Homotetramer. A metal cation serves as cofactor. The cofactor is thiamine diphosphate.

It catalyses the reaction a 2-oxocarboxylate + H(+) = an aldehyde + CO2. The sequence is that of Pyruvate decarboxylase 1 (PDC1) from Pisum sativum (Garden pea).